The chain runs to 87 residues: Small ribosomal subunit protein bS20 (87 aa).

The protein belongs to the bacterial ribosomal protein bS20 family.

Its function is as follows. Binds directly to 16S ribosomal RNA. This chain is Small ribosomal subunit protein bS20, found in Mycoplasma pneumoniae (strain ATCC 29342 / M129 / Subtype 1) (Mycoplasmoides pneumoniae).